The following is a 237-amino-acid chain: Ribosomal RNA small subunit methyltransferase G (237 aa).

S-adenosyl-L-methionine-binding positions include glycine 78, phenylalanine 83, 129 to 130, and arginine 148; that span reads AE.

Belongs to the methyltransferase superfamily. RNA methyltransferase RsmG family.

The protein localises to the cytoplasm. Specifically methylates the N7 position of a guanine in 16S rRNA. This Streptococcus pyogenes serotype M18 (strain MGAS8232) protein is Ribosomal RNA small subunit methyltransferase G.